The primary structure comprises 145 residues: D-aminoacyl-tRNA deacylase (145 aa).

The short motif at 137–138 is the Gly-cisPro motif, important for rejection of L-amino acids element; that stretch reads GP.

It belongs to the DTD family. Homodimer.

The protein resides in the cytoplasm. It carries out the reaction glycyl-tRNA(Ala) + H2O = tRNA(Ala) + glycine + H(+). The enzyme catalyses a D-aminoacyl-tRNA + H2O = a tRNA + a D-alpha-amino acid + H(+). In terms of biological role, an aminoacyl-tRNA editing enzyme that deacylates mischarged D-aminoacyl-tRNAs. Also deacylates mischarged glycyl-tRNA(Ala), protecting cells against glycine mischarging by AlaRS. Acts via tRNA-based rather than protein-based catalysis; rejects L-amino acids rather than detecting D-amino acids in the active site. By recycling D-aminoacyl-tRNA to D-amino acids and free tRNA molecules, this enzyme counteracts the toxicity associated with the formation of D-aminoacyl-tRNA entities in vivo and helps enforce protein L-homochirality. The sequence is that of D-aminoacyl-tRNA deacylase from Lactobacillus helveticus (strain DPC 4571).